Reading from the N-terminus, the 360-residue chain is Inward rectifier potassium channel 13 (360 aa).

The Cytoplasmic segment spans residues 1–50 (MESSNCKVITPLLSQRHRRMVTKDGHSTLQTDGAPRGLVYLRDAWGTLID). The helical transmembrane segment at 51 to 77 (MRWRWVMLVFSASFVLHWLVFAVLWYV) threads the bilayer. The Extracellular portion of the chain corresponds to 78–105 (LAEMNGDLELDHDAPPENHTICVKYITS). The segment at residues 106-122 (FTAAFSFSLETQLTIGY) is an intramembrane region (helical; Pore-forming). Positions 119–124 (TIGYGT) match the Selectivity filter motif. Over 123–131 (GTMFPSGDC) the chain is Extracellular. The chain crosses the membrane as a helical span at residues 132–157 (PSAIALLAIQMLLGLMLEAFITGAFV). The Cytoplasmic segment spans residues 158–360 (AKIARPKNRA…FQISETGLTE (203 aa)). S201 carries the phosphoserine; by PKC modification. A Phosphoserine; by PKA modification is found at S287.

This sequence belongs to the inward rectifier-type potassium channel (TC 1.A.2.1) family. KCNJ13 subfamily. In terms of assembly, homotetramer. In terms of processing, phosphorylation at Ser-201 by PKC strongly inhibits ionic currents, while phosphorylation at Ser-287 by PKA increases them.

Its subcellular location is the membrane. The protein resides in the cell membrane. It catalyses the reaction K(+)(in) = K(+)(out). Its activity is regulated as follows. Inhibited by Ba(2+) and Cs(+), although sensitivity to those inhibitors is much lower than in other Kir channels. In terms of biological role, inward rectifier potassium channels are characterized by a greater tendency to allow potassium to flow into the cell rather than out of it. Their voltage dependence is regulated by the concentration of extracellular potassium; as external potassium is raised, the voltage range of the channel opening shifts to more positive voltages. The inward rectification is mainly due to the blockage of outward current by internal magnesium. KCNJ13 has a very low single channel conductance, low sensitivity to block by external barium and cesium, and no dependence of its inward rectification properties on the internal blocking particle magnesium. This Cavia porcellus (Guinea pig) protein is Inward rectifier potassium channel 13 (KCNJ13).